Reading from the N-terminus, the 120-residue chain is Histone H2B (120 aa).

The tract at residues 1-26 (MAEPAKKKPKKLPKKDKGQKDIKRKK) is disordered. The residue at position 2 (Ala-2) is a Blocked amino end (Ala). An N6-acetyllysine mark is found at Lys-7, Lys-10, and Lys-11. Residue Lys-115 forms a Glycyl lysine isopeptide (Lys-Gly) (interchain with G-Cter in ubiquitin) linkage.

The protein belongs to the histone H2B family. The nucleosome is a histone octamer containing two molecules each of H2A, H2B, H3 and H4 assembled in one H3-H4 heterotetramer and two H2A-H2B heterodimers. The octamer wraps approximately 147 bp of DNA. Post-translationally, can be acetylated to form H2BK6ac, H2BK33ac and H2BK34ac. In terms of processing, monoubiquitinated to form H2BK143ub1; may give a specific tag for epigenetic transcriptional activation.

It is found in the nucleus. The protein localises to the chromosome. Its function is as follows. Core component of nucleosome. Nucleosomes wrap and compact DNA into chromatin, limiting DNA accessibility to the cellular machineries which require DNA as a template. Histones thereby play a central role in transcription regulation, DNA repair, DNA replication and chromosomal stability. DNA accessibility is regulated via a complex set of post-translational modifications of histones, also called histone code, and nucleosome remodeling. This Pisum sativum (Garden pea) protein is Histone H2B.